The sequence spans 185 residues: Large ribosomal subunit protein bL25 (185 aa).

Belongs to the bacterial ribosomal protein bL25 family. CTC subfamily. As to quaternary structure, part of the 50S ribosomal subunit; part of the 5S rRNA/L5/L18/L25 subcomplex. Contacts the 5S rRNA. Binds to the 5S rRNA independently of L5 and L18.

Its function is as follows. This is one of the proteins that binds to the 5S RNA in the ribosome where it forms part of the central protuberance. The protein is Large ribosomal subunit protein bL25 of Chlamydia abortus (strain DSM 27085 / S26/3) (Chlamydophila abortus).